A 206-amino-acid chain; its full sequence is LexA repressor (206 aa).

Positions 28-48 (RAEIATRLGFKSANAAEEHLK) form a DNA-binding region, H-T-H motif. Catalysis depends on for autocatalytic cleavage activity residues serine 123 and lysine 160.

It belongs to the peptidase S24 family. As to quaternary structure, homodimer.

The catalysed reaction is Hydrolysis of Ala-|-Gly bond in repressor LexA.. Represses a number of genes involved in the response to DNA damage (SOS response), including recA and lexA. In the presence of single-stranded DNA, RecA interacts with LexA causing an autocatalytic cleavage which disrupts the DNA-binding part of LexA, leading to derepression of the SOS regulon and eventually DNA repair. The protein is LexA repressor of Shewanella sp. (strain MR-7).